Here is a 656-residue protein sequence, read N- to C-terminus: ATP-dependent RNA helicase MRH4, mitochondrial (656 aa).

The transit peptide at 1–46 directs the protein to the mitochondrion; it reads MTSFSHLSRLRMSAFLPHVCLQCRLKTVSSLPAQSSASSLLQAVRH. The segment at 42–125 is disordered; the sequence is QAVRHASSAR…KDKDGSEKKQ (84 aa). Polar residues predominate over residues 60–71; sequence MTLSPNVAQSTV. A compositionally biased stretch (basic and acidic residues) spans 96 to 125; that stretch reads NLRDRQRPRSQAELKRTSFKKDKDGSEKKQ. Residues 157 to 190 carry the Q motif motif; that stretch reads TSFDQFDLLPSVRQSVYDSALPGLEYVTPTPIQR. One can recognise a Helicase ATP-binding domain in the interval 210–431; sequence QEDMPRFDQY…RERFPQIRRL (222 aa). ATP is bound at residue 223 to 230; sequence AETGSGKT. The tract at residues 246–270 is disordered; sequence AKDKEEEERMAKEELEKEQEQAKEK. The DEAD box signature appears at 378 to 381; it reads DEAD. The Helicase C-terminal domain occupies 480-656; sequence DVGYQVTGQK…EAMYRGQALI (177 aa).

It belongs to the DEAD box helicase family. MRH4 subfamily.

Its subcellular location is the mitochondrion. The catalysed reaction is ATP + H2O = ADP + phosphate + H(+). Its function is as follows. ATP-binding RNA helicase involved in mitochondrial RNA metabolism. Required for maintenance of mitochondrial DNA. The chain is ATP-dependent RNA helicase MRH4, mitochondrial (MRH4) from Coccidioides immitis (strain RS) (Valley fever fungus).